The sequence spans 775 residues: Semaphorin-3E (775 aa).

The first 25 residues, 1 to 25 (MAPAGHILTLLLWGHLLELWTPGHS), serve as a signal peptide directing secretion. The Sema domain occupies 32–516 (RLRLSHKELL…SASAVAQVRF (485 aa)). A glycan (N-linked (GlcNAc...) asparagine) is linked at Asn44. A disulfide bridge connects residues Cys105 and Cys115. A glycan (N-linked (GlcNAc...) asparagine) is linked at Asn126. A disulfide bridge links Cys133 with Cys142. Asn175 and Asn330 each carry an N-linked (GlcNAc...) asparagine glycan. Cystine bridges form between Cys270/Cys382, Cys294/Cys342, and Cys519/Cys537. The Ig-like C2-type domain maps to 581–669 (ALDRTEERLA…NFVHTVRKIT (89 aa)). A glycan (N-linked (GlcNAc...) asparagine) is linked at Asn596. Cys654 and Cys729 form a disulfide bridge.

This sequence belongs to the semaphorin family. In terms of assembly, interacts with PLXND1. As to expression, detected in neurons in the thalamus. Detected in embryonic vasculature. Developing lungs, developing skeletal elements and ventral horns of the developing neural tube. Correlates positively with tumor progression.

Its subcellular location is the secreted. In terms of biological role, plays an important role in signaling via the cell surface receptor PLXND1. Mediates reorganization of the actin cytoskeleton, leading to the retraction of cell projections. Promotes focal adhesion disassembly and inhibits adhesion of endothelial cells to the extracellular matrix. Regulates angiogenesis, both during embryogenesis and after birth. Can down-regulate sprouting angiogenesis. Required for normal vascular patterning during embryogenesis. Plays an important role in ensuring the specificity of synapse formation. This is Semaphorin-3E (Sema3e) from Mus musculus (Mouse).